The sequence spans 232 residues: Large ribosomal subunit protein uL1 (232 aa).

This sequence belongs to the universal ribosomal protein uL1 family. Part of the 50S ribosomal subunit.

Binds directly to 23S rRNA. The L1 stalk is quite mobile in the ribosome, and is involved in E site tRNA release. Its function is as follows. Protein L1 is also a translational repressor protein, it controls the translation of the L11 operon by binding to its mRNA. The protein is Large ribosomal subunit protein uL1 of Clostridium novyi (strain NT).